The following is a 416-amino-acid chain: Protein LAZY 1 (416 aa).

The helical transmembrane segment at 63-83 (FTFGGSGLLTIGTLGIAAVAI) threads the bilayer. The IGT motif signature appears at 69–75 (GLLTIGT). 2 disordered regions span residues 266–306 (AAAA…GMPA) and 337–361 (KKSRNRGATDNGGGAVATGDPDGPL). Residues 270 to 282 (GVGGDRAGKGGGY) show a composition bias toward gly residues. The Nuclear localization signal motif lies at 278–295 (KGGGYKTMKKRKVKDEKG).

Belongs to the LAZY family. As to expression, expressed specifically in the cells at the inner side of the vascular bundles of young leaf sheaths and peripheral cylinders of vascular bundles in the unelongated stems. Expressed in the leaf sheath pulvinus and the lamina joint.

It localises to the cell membrane. It is found in the nucleus. Its function is as follows. Involved in the regulation of shoot gravitropism and tiller angle through negative regulation of basipetal polar auxin transport (PAT). Acts as positive regulator of lateral auxin transport. Promotes vertical shoot growth. LAZY1 and TAC1 play opposite functions in the regulation of tiller growth angle. The protein is Protein LAZY 1 of Oryza sativa subsp. japonica (Rice).